Reading from the N-terminus, the 80-residue chain is Small ribosomal subunit protein uS17 (80 aa).

The protein belongs to the universal ribosomal protein uS17 family. As to quaternary structure, part of the 30S ribosomal subunit.

In terms of biological role, one of the primary rRNA binding proteins, it binds specifically to the 5'-end of 16S ribosomal RNA. The polypeptide is Small ribosomal subunit protein uS17 (Cereibacter sphaeroides (strain ATCC 17029 / ATH 2.4.9) (Rhodobacter sphaeroides)).